We begin with the raw amino-acid sequence, 194 residues long: UPF0301 protein CBU_2093 (194 aa).

It belongs to the UPF0301 (AlgH) family.

The sequence is that of UPF0301 protein CBU_2093 from Coxiella burnetii (strain RSA 493 / Nine Mile phase I).